A 551-amino-acid chain; its full sequence is Chitinase (551 aa).

Positions 1–17 (MLYKLLNVLWLVAVSNA) are cleaved as a signal peptide. The tract at residues 1–149 (MLYKLLNVLW…NKPGRREDKI (149 aa)) is chitin binding domain (CBD). Residues 148 to 548 (KIVAAYFVEW…NAINAQFKPK (401 aa)) form the GH18 domain. N-linked (GlcNAc...) asparagine; by host glycosylation occurs at Asn173. Glu305 functions as the Proton donor in the catalytic mechanism. A glycan (N-linked (GlcNAc...) asparagine; by host) is linked at Asn444. Positions 548–551 (KDEL) match the Prevents secretion from ER motif.

The protein belongs to the glycosyl hydrolase 18 family. Chitinase class II subfamily. As to quaternary structure, interacts with host VCATH.

It is found in the host endoplasmic reticulum lumen. The catalysed reaction is Random endo-hydrolysis of N-acetyl-beta-D-glucosaminide (1-&gt;4)-beta-linkages in chitin and chitodextrins.. Its function is as follows. Plays a role in host liquefaction to facilitate horizontal transmission of the virus by hydrolyzing beta-chitin and by regulating the cysteine protease VCATH. Localized in the host reticulum endoplasmic via its KDEL motif, interacts with and thus prevents VCATH secretion before host cell lysis occurs. This Lepidoptera (butterflies and moths) protein is Chitinase (CHIA).